Here is a 143-residue protein sequence, read N- to C-terminus: Transcriptional regulator MraZ (143 aa).

SpoVT-AbrB domains follow at residues 5–47 (EYLH…PLDE) and 76–119 (ATEC…SQAL).

It belongs to the MraZ family. As to quaternary structure, forms oligomers.

It localises to the cytoplasm. It is found in the nucleoid. The protein is Transcriptional regulator MraZ of Desulfitobacterium hafniense (strain Y51).